A 237-amino-acid polypeptide reads, in one-letter code: tRNA(His) guanylyltransferase (237 aa).

3 residues coordinate Mg(2+): D29, G30, and D77. GTP is bound by residues 29-34 (DGKHFH) and 76-77 (SD).

The protein belongs to the tRNA(His) guanylyltransferase family. Requires Mg(2+) as cofactor.

The enzyme catalyses a 5'-end ribonucleotide-tRNA(His) + GTP + ATP + H2O = a 5'-end phospho-guanosine-ribonucleotide-tRNA(His) + AMP + 2 diphosphate + H(+). Functionally, adds a GMP to the 5'-end of tRNA(His) after transcription and RNase P cleavage. The protein is tRNA(His) guanylyltransferase (THG1) of Eremothecium gossypii (strain ATCC 10895 / CBS 109.51 / FGSC 9923 / NRRL Y-1056) (Yeast).